Here is a 646-residue protein sequence, read N- to C-terminus: MSYESGRSSSSSESTRPPTLKEEPNGKIAWEESVKKSRENNENDSTLLRRKLGETRKAIETGGSSRNKLSALTPLKKVVDERKDSVQPQVPSMGFTYSLPNLKTLNSFSDAEQARIMQDYLSRGVNQGNSNNYVDPLYRQLNPTMGSSRNRPVWSLNQPLPHVLDRGLAAKMIQKNMDARSRASSRRGSTDISRGGSTTSVKDWKRLLRGAAPGKKLGDIEAQTQRDNTVGADVKPTKLEPENPQKPSNTHIENVSRKKKRTSHNVNFSLGDESYASSIADAESRKLKNMQTLDGSTPVYTKLPEELIEEENKSTSALDGNEIGASEDEDADIMTFPNFWAKIRYHMREPFAEFLGTLVLVIFGVGGNLQATVTKGSGGSYESLSFAWGFGCMLGVYVAGGISGGHINPAVTISMAIFRKFPWKKVPVYIVAQIIGAYFGGAMAYGYFWSSITEFEGGPHIRTTATGACLFTDPKSYVTWRNAFFDEFIGASILVGCLMALLDDSNAPPGNGMTALIIGFLVAAIGMALGYQTSFTINPARDLGPRIFASMIGYGPHAFHLTHWWWTWGAWGGPIAGGIAGALIYDIFIFTGCESPVNYPDNGYIENRVGKLLHAEFHQNDGTVSDESGVNSNSNTGSKKSVPTSS.

Low complexity predominate over residues 1 to 14 (MSYESGRSSSSSES). 2 disordered regions span residues 1–68 (MSYE…SRNK) and 175–262 (KNMD…KKRT). The Cytoplasmic portion of the chain corresponds to 1 to 350 (MSYESGRSSS…AKIRYHMREP (350 aa)). The span at 19–41 (TLKEEPNGKIAWEESVKKSRENN) shows a compositional bias: basic and acidic residues. A compositionally biased stretch (polar residues) spans 190–201 (TDISRGGSTTSV). Residues 351–371 (FAEFLGTLVLVIFGVGGNLQA) form a helical membrane-spanning segment. Over 372–383 (TVTKGSGGSYES) the chain is Extracellular. A helical transmembrane segment spans residues 384 to 404 (LSFAWGFGCMLGVYVAGGISG). Topologically, residues 405–427 (GHINPAVTISMAIFRKFPWKKVP) are cytoplasmic. The NPA 1 motif lies at 408–410 (NPA). Residues 428-448 (VYIVAQIIGAYFGGAMAYGYF) form a helical membrane-spanning segment. Topologically, residues 449–481 (WSSITEFEGGPHIRTTATGACLFTDPKSYVTWR) are extracellular. Residues 482–502 (NAFFDEFIGASILVGCLMALL) traverse the membrane as a helical segment. Residues 503–509 (DDSNAPP) are Cytoplasmic-facing. The helical transmembrane segment at 510 to 530 (GNGMTALIIGFLVAAIGMALG) threads the bilayer. Topologically, residues 531–569 (YQTSFTINPARDLGPRIFASMIGYGPHAFHLTHWWWTWG) are extracellular. The NPA 2 motif lies at 538-540 (NPA). Residues 570–590 (AWGGPIAGGIAGALIYDIFIF) traverse the membrane as a helical segment. The Cytoplasmic segment spans residues 591–646 (TGCESPVNYPDNGYIENRVGKLLHAEFHQNDGTVSDESGVNSNSNTGSKKSVPTSS). The disordered stretch occupies residues 621-646 (DGTVSDESGVNSNSNTGSKKSVPTSS).

The protein belongs to the MIP/aquaporin (TC 1.A.8) family.

The protein localises to the cell membrane. The catalysed reaction is glycerol(in) = glycerol(out). Functionally, channel protein that mediates glycerol entry under ethanol stimulation. Does not seem to mediate glycerol uptake under standard conditions. In Saccharomyces cerevisiae (strain ATCC 204508 / S288c) (Baker's yeast), this protein is Aquaglycerol porin AQY3.